The chain runs to 180 residues: NADH-quinone oxidoreductase subunit I (180 aa).

4Fe-4S ferredoxin-type domains are found at residues 50 to 80 and 90 to 119; these read LTRD…LQKA and EFFR…LTPD. [4Fe-4S] cluster contacts are provided by C60, C63, C66, C70, C99, C102, C105, and C109.

The protein belongs to the complex I 23 kDa subunit family. NDH-1 is composed of 13 different subunits. Subunits NuoA, H, J, K, L, M, N constitute the membrane sector of the complex. [4Fe-4S] cluster is required as a cofactor.

The protein resides in the cell inner membrane. The catalysed reaction is a quinone + NADH + 5 H(+)(in) = a quinol + NAD(+) + 4 H(+)(out). In terms of biological role, NDH-1 shuttles electrons from NADH, via FMN and iron-sulfur (Fe-S) centers, to quinones in the respiratory chain. The immediate electron acceptor for the enzyme in this species is believed to be ubiquinone. Couples the redox reaction to proton translocation (for every two electrons transferred, four hydrogen ions are translocated across the cytoplasmic membrane), and thus conserves the redox energy in a proton gradient. This is NADH-quinone oxidoreductase subunit I from Salmonella choleraesuis (strain SC-B67).